The chain runs to 1167 residues: RNA-directed RNA polymerase (1167 aa).

A RdRp catalytic domain is found at 553–735 (LTYGILAEAT…KALASYTGLE (183 aa)).

Belongs to the reoviridae RNA-directed RNA polymerase family. As to quaternary structure, interacts with VP3 (Potential). Interacts with VP2 (Potential). Interacts with NSP5; this interaction is probably necessary for the formation of functional virus factories.

Its subcellular location is the virion. It catalyses the reaction RNA(n) + a ribonucleoside 5'-triphosphate = RNA(n+1) + diphosphate. RNA-directed RNA polymerase that is involved in both transcription and genome replication. Together with VP3 capping enzyme, forms an enzyme complex positioned near the channels situated at each of the five-fold vertices of the core. Following infection, the outermost layer of the virus is lost, leaving a double-layered particle (DLP) made up of the core and VP6 shell. VP1 then catalyzes the transcription of fully conservative plus-strand genomic RNAs that are extruded through the DLP's channels into the cytoplasm where they function as mRNAs for translation of viral proteins. One copy of each of the viral (+)RNAs is also recruited during core assembly, together with newly synthesized polymerase complexes and VP2. The polymerase of these novo-formed particles catalyzes the synthesis of complementary minus-strands leading to dsDNA formation. To do so, the polymerase specifically recognizes conserved 3' sequence(s) in plus-strand RNA templates. Once dsRNA synthesis is complete, the polymerase switches to the transcriptional mode, thus providing secondary transcription. The sequence is that of RNA-directed RNA polymerase from Rotavirus X (isolate RVX/Human/Bangladesh/NADRV-B219/2002/GXP[X]) (RV ADRV-N).